Consider the following 198-residue polypeptide: Putative pseudouridine methyltransferase (198 aa).

Met132 and Cys186 together coordinate S-adenosyl-L-methionine.

Belongs to the methyltransferase superfamily. TrmY family.

It localises to the cytoplasm. This Shewanella baltica (strain OS185) protein is Putative pseudouridine methyltransferase.